The following is a 580-amino-acid chain: Arginine--tRNA ligase (580 aa).

The short motif at 127 to 137 (PNLAKEMHVGH) is the 'HIGH' region element.

It belongs to the class-I aminoacyl-tRNA synthetase family. In terms of assembly, monomer.

Its subcellular location is the cytoplasm. The enzyme catalyses tRNA(Arg) + L-arginine + ATP = L-arginyl-tRNA(Arg) + AMP + diphosphate. In Idiomarina loihiensis (strain ATCC BAA-735 / DSM 15497 / L2-TR), this protein is Arginine--tRNA ligase.